The primary structure comprises 307 residues: MAKKKIAISCGDIQGVGLELILKSHKEVNAFCEPLYLIDGELLERANQLLHNAYETKTLNTLAIHSPLPLLNSSTIGKVSAQSGAYSFESFKKACELADSKEVDGICTLPINKLAWQQAQIPFVGHTDFLKQRYKDHQIIMMLGCSKLFVGLFSDHVPLGAVSQLIQVKALVKFLLAFQKSTQAKIVQVCGFNPHAGEEGLFGKEDEKILKAIQKSNQTLGFECFLGPLPADSAFAPNKRQITPFYVSMSHDVGLAPLKALYFDESINVSLNAPILRASTDHGTAFDIAYQNKANNKSYLNAIKYLA.

The substrate site is built by His-126 and Thr-127. A divalent metal cation is bound by residues His-156, His-195, and His-251. Lys-259, Asn-268, and Arg-277 together coordinate substrate.

The protein belongs to the PdxA family. In terms of assembly, homodimer. Zn(2+) serves as cofactor. Mg(2+) is required as a cofactor. It depends on Co(2+) as a cofactor.

The protein localises to the cytoplasm. The catalysed reaction is 4-(phosphooxy)-L-threonine + NAD(+) = 3-amino-2-oxopropyl phosphate + CO2 + NADH. Its pathway is cofactor biosynthesis; pyridoxine 5'-phosphate biosynthesis; pyridoxine 5'-phosphate from D-erythrose 4-phosphate: step 4/5. Functionally, catalyzes the NAD(P)-dependent oxidation of 4-(phosphooxy)-L-threonine (HTP) into 2-amino-3-oxo-4-(phosphooxy)butyric acid which spontaneously decarboxylates to form 3-amino-2-oxopropyl phosphate (AHAP). In Helicobacter pylori (strain G27), this protein is 4-hydroxythreonine-4-phosphate dehydrogenase.